The chain runs to 395 residues: Cyclin-A2 (395 aa).

A disordered region spans residues 1-93 (MLAEQENQEN…EEAADAPGLR (93 aa)). Positions 27-60 (ALGLLRGGPARPGPAAQAARNGEGRGAAAGQQQQ) are enriched in low complexity.

This sequence belongs to the cyclin family. Cyclin AB subfamily. As to quaternary structure, interacts with the CDK1 and CDK2 protein kinases to form serine/threonine kinase holoenzyme complexes.

The protein resides in the nucleus. The protein localises to the cytoplasm. In terms of biological role, cyclin which controls both the G1/S and the G2/M transition phases of the cell cycle. Functions through the formation of specific serine/threonine kinase holoenzyme complexes with the cyclin-dependent protein kinases CDK1 and CDK2. The cyclin subunit confers the substrate specificity of these complexes and differentially interacts with and activates CDK1 and CDK2 throughout the cell cycle. The polypeptide is Cyclin-A2 (Gallus gallus (Chicken)).